We begin with the raw amino-acid sequence, 130 residues long: HTH-type transcriptional repressor YtrA (130 aa).

Residues 10–78 form the HTH gntR-type domain; sequence TPIYEQIIQQ…RGRGTYISEN (69 aa). A DNA-binding region (H-T-H motif) is located at residues 38-57; sequence VRELATIIIANPNTVSKAYK.

Its function is as follows. Negatively regulates ABC transporter complex ytrBCDEF that plays a role in acetoin utilization during stationary phase and sporulation. This chain is HTH-type transcriptional repressor YtrA (ytrA), found in Bacillus subtilis (strain 168).